A 248-amino-acid chain; its full sequence is uncharacterized protein (248 aa).

The helical transmembrane segment at 7–25 threads the bilayer; that stretch reads TIFIGGIYGLGVYIGAVAW.

Belongs to the methyltransferase superfamily. METL family.

It localises to the mitochondrion inner membrane. Probable methyltransferase. This is an uncharacterized protein from Schizosaccharomyces pombe (strain 972 / ATCC 24843) (Fission yeast).